Consider the following 337-residue polypeptide: tRNA N6-adenosine threonylcarbamoyltransferase (337 aa).

Positions 111 and 115 each coordinate Fe cation. Substrate is bound by residues 134-138 (LVSGG), aspartate 167, glycine 180, and asparagine 272. Aspartate 300 is a binding site for Fe cation.

Belongs to the KAE1 / TsaD family. Fe(2+) is required as a cofactor.

It is found in the cytoplasm. The catalysed reaction is L-threonylcarbamoyladenylate + adenosine(37) in tRNA = N(6)-L-threonylcarbamoyladenosine(37) in tRNA + AMP + H(+). Its function is as follows. Required for the formation of a threonylcarbamoyl group on adenosine at position 37 (t(6)A37) in tRNAs that read codons beginning with adenine. Is involved in the transfer of the threonylcarbamoyl moiety of threonylcarbamoyl-AMP (TC-AMP) to the N6 group of A37, together with TsaE and TsaB. TsaD likely plays a direct catalytic role in this reaction. In Methylococcus capsulatus (strain ATCC 33009 / NCIMB 11132 / Bath), this protein is tRNA N6-adenosine threonylcarbamoyltransferase.